The primary structure comprises 914 residues: Neuropilin-1 (914 aa).

The first 18 residues, 1–18 (MDWGLFLHCAALTFTLSR), serve as a signal peptide directing secretion. The Extracellular segment spans residues 20–847 (LRSDKCGDTI…PGNVLKTLDP (828 aa)). Intrachain disulfides connect Cys25/Cys52, Cys80/Cys102, and Cys145/Cys171. CUB domains lie at 25–139 (CGDT…YEVF) and 145–263 (CSRN…YSVS). Asn148 carries N-linked (GlcNAc...) asparagine glycosylation. Ca(2+) is bound by residues Glu193, Asp207, and Asp248. A disulfide bond links Cys204 and Cys226. An N-linked (GlcNAc...) asparagine glycan is attached at Asn259. Disulfide bonds link Cys273-Cys422 and Cys429-Cys581. F5/8 type C domains lie at 273-422 (CMEP…VYGC) and 429-581 (CSGM…LLGC). N-linked (GlcNAc...) asparagine glycosylation occurs at Asn520. Ser610 carries an O-linked (Xyl...) (chondroitin sulfate) serine; alternate glycan. Residue Ser610 is glycosylated (O-linked (Xyl...) (heparan sulfate) serine; alternate). Positions 636–801 (PYNLNCGFGW…NHISQEDCQK (166 aa)) constitute an MAM domain. A disordered region spans residues 809 to 829 (IVEEDPESNQTGFTPSYRTDE). A compositionally biased stretch (polar residues) spans 816–825 (SNQTGFTPSY). Asn817 carries N-linked (GlcNAc...) asparagine glycosylation. A helical membrane pass occupies residues 848-870 (ILITIIAMSALGVLLGAICGVVL). At 871–914 (YCACWHNGMSERNLSALENYNFELVDGVKLKKDKLNTQNSYSEA) the chain is on the cytoplasmic side.

Belongs to the neuropilin family. Homodimer, and heterodimer. In terms of tissue distribution, developing nervous system; optic tectum (layers D and E of SGFS), amacrine cells of retina, neurites of dorsal root ganglia. Also expressed in non-neuronal cells, e.g. blood vessels in the entire embryo.

It is found in the mitochondrion membrane. The protein localises to the cell membrane. In terms of biological role, receptor involved in the development of the cardiovascular system, in angiogenesis, in the formation of certain neuronal circuits and in organogenesis outside the nervous system. Mediates the chemorepulsant activity of semaphorins. Binding to VEGFA initiates a signaling pathway needed for motor neuron axon guidance and cell body migration, including for the caudal migration of facial motor neurons from rhombomere 4 to rhombomere 6 during embryonic development. Regulates mitochondrial iron transport via interaction. This Gallus gallus (Chicken) protein is Neuropilin-1 (NRP1).